We begin with the raw amino-acid sequence, 440 residues long: Gamma-aminobutyric acid receptor subunit pi (440 aa).

The N-terminal stretch at 1–23 (MSYSLYLAFLCLSLLTQRTCIQG) is a signal peptide. Residues 24–241 (NQVNVEVSRS…LVLQFELRRN (218 aa)) are Extracellular-facing. Asparagine 43, asparagine 102, and asparagine 145 each carry an N-linked (GlcNAc...) asparagine glycan. Cysteine 160 and cysteine 174 are disulfide-bonded. Residues asparagine 196 and asparagine 228 are each glycosylated (N-linked (GlcNAc...) asparagine). The helical transmembrane segment at 242 to 262 (VLYFILETYVPSTFLVVLSWV) threads the bilayer. The Cytoplasmic segment spans residues 263-270 (SFWISLDS). Residues 271–290 (VPARTCIGVTTVLSMTTLMI) traverse the membrane as a helical segment. Over 291–301 (GSRTSLPNTNC) the chain is Extracellular. Residues 302–322 (FIKAIDVYLGICFSFVFGALL) traverse the membrane as a helical segment. Residues 323–419 (EYAVAHYSSL…NPSNVDRYSK (97 aa)) lie on the Cytoplasmic side of the membrane. A helical membrane pass occupies residues 420–440 (LLFPLIFMLANVFYWAYYMYF).

This sequence belongs to the ligand-gated ion channel (TC 1.A.9) family. Gamma-aminobutyric acid receptor (TC 1.A.9.5) subfamily. GABRP sub-subfamily. As to quaternary structure, heteropentamer, formed by a combination of alpha (GABRA1-6), beta (GABRB1-3), gamma (GABRG1-3), delta (GABRD), epsilon (GABRE), rho (GABRR1-3), pi (GABRP) and theta (GABRQ) chains, each subunit exhibiting distinct physiological and pharmacological properties.

The protein localises to the cell membrane. It is found in the apical cell membrane. It catalyses the reaction chloride(in) = chloride(out). Functionally, pi subunit of the heteropentameric ligand-gated chloride channel gated by gamma-aminobutyric acid (GABA). GABA-gated chloride channels, also named GABA(A) receptors (GABAAR), consist of five subunits arranged around a central pore and contain GABA active binding site(s) located at the alpha and beta subunit interfaces. When activated by GABA, GABAARs selectively allow the flow of chloride anions across the cell membrane down their electrochemical gradient. Pi-containing GABAARs are mostly located in peripheral tissues. In the uterus, pi subunits modulate uterus contraction by altering the sensitivity of GABAARs to pregnanolone. In the lungs, pi-containing GABAARs contribute to pulmonary fluid transport via luminal secretion of chloride. In Mus musculus (Mouse), this protein is Gamma-aminobutyric acid receptor subunit pi.